The primary structure comprises 123 residues: Class I hydrophobin 2 (123 aa).

The signal sequence occupies residues 1 to 16 (MYAYTVIAFLAASVAA). 4 disulfide bridges follow: Cys35–Cys97, Cys43–Cys91, Cys44–Cys72, and Cys98–Cys116.

This sequence belongs to the fungal hydrophobin family.

Its subcellular location is the secreted. The protein localises to the cell wall. Its function is as follows. Aerial growth, conidiation, and dispersal of filamentous fungi in the environment rely upon a capability of their secreting small amphipathic proteins called hydrophobins (HPBs) with low sequence identity. Class I can self-assemble into an outermost layer of rodlet bundles on aerial cell surfaces, conferring cellular hydrophobicity that supports fungal growth, development and dispersal; whereas Class II form highly ordered films at water-air interfaces through intermolecular interactions but contribute nothing to the rodlet structure. HYD1 and HYD2 are required for the structural integrity of the long aerial chains of microconidia. Does not seem to be important for the ability to cause seedling disease. The protein is Class I hydrophobin 2 of Gibberella moniliformis (Maize ear and stalk rot fungus).